A 362-amino-acid polypeptide reads, in one-letter code: uncharacterized protein (362 aa).

A helical membrane pass occupies residues 13-33; the sequence is VLILSVGLNMLFLLLFYSAIF. Residues 314–357 enclose the LysM domain; sequence EEYVVQDGDSLWLIAKRFGIPMDKIIQKNGLNHHRLFPGKVLKL.

Belongs to the chlamydial CPn_0593/CT_474/TC_0759 family.

The protein resides in the membrane. This is an uncharacterized protein from Chlamydia pneumoniae (Chlamydophila pneumoniae).